A 343-amino-acid chain; its full sequence is Thioredoxin domain-containing protein 15 (343 aa).

The signal sequence occupies residues 1-20 (MQLLCWWQILLWVLGLPARG). The Extracellular portion of the chain corresponds to 21 to 304 (LEEDSGHTWQ…GPLPSTLVKT (284 aa)). Over residues 86–95 (EDQRSTEAHD) the composition is skewed to basic and acidic residues. Positions 86 to 112 (EDQRSTEAHDGTCSAQGDEDPRCGGRE) are disordered. The region spanning 162–279 (ERNVTGLENF…LKIFIFNQTG (118 aa)) is the Thioredoxin domain. N-linked (GlcNAc...) asparagine glycans are attached at residues asparagine 170, asparagine 177, asparagine 189, and asparagine 276. Residues 305–325 (VDWLLVFSLFFLISFIMYATI) form a helical membrane-spanning segment. The Cytoplasmic segment spans residues 326–343 (RTESIRWLIPGQEQEHAE).

Its subcellular location is the cell projection. It is found in the cilium membrane. Functionally, acts as a positive regulator of ciliary hedgehog signaling. Required for cilia biogenesis. The protein is Thioredoxin domain-containing protein 15 (Txndc15) of Rattus norvegicus (Rat).